A 674-amino-acid polypeptide reads, in one-letter code: Pre-mRNA-splicing factor cwf4 (674 aa).

16 HAT repeats span residues Glu-50–Asp-82, Lys-84–Lys-116, Arg-118–Met-150, Gly-152–Arg-183, His-185–Glu-216, Gly-218–Arg-253, Lys-255–Gln-289, Thr-299–Ser-331, Gly-333–Asn-367, Lys-377–Arg-413, Arg-415–Ala-446, Lys-448–Lys-480, Gly-482–Glu-516, Met-518–Ala-549, Thr-567–Thr-608, and Asp-610–Pro-643.

The protein belongs to the crooked-neck family. As to quaternary structure, belongs to the 40S cdc5-associated complex (or cwf complex), a spliceosome sub-complex reminiscent of a late-stage spliceosome composed of the U2, U5 and U6 snRNAs and at least brr2, cdc5, cwf2/prp3, cwf3/syf1, cwf4/syf3, cwf5/ecm2, spp42/cwf6, cwf7/spf27, cwf8, cwf9, cwf10, cwf11, cwf12, prp45/cwf13, cwf14, cwf15, cwf16, cwf17, cwf18, cwf19, cwf20, cwf21, cwf22, cwf23, cwf24, cwf25, cwf26, cyp7/cwf27, cwf28, cwf29/ist3, lea1, msl1, prp5/cwf1, prp10, prp12/sap130, prp17, prp22, sap61, sap62, sap114, sap145, slu7, smb1, smd1, smd3, smf1, smg1 and syf2.

It localises to the nucleus. Functionally, involved in pre-mRNA splicing and cell cycle progression. Required for the spliceosome assembly and initiation of the DNA replication. This Schizosaccharomyces pombe (strain 972 / ATCC 24843) (Fission yeast) protein is Pre-mRNA-splicing factor cwf4 (cwf4).